Reading from the N-terminus, the 623-residue chain is mRNA-capping enzyme (623 aa).

The segment at 13 to 224 (MGLPDRWLHC…IDNGRPSTSQ (212 aa)) is TPase. Residues 44-196 (YDNQIAERRY…YDPTEDDKIL (153 aa)) form the Tyrosine-protein phosphatase domain. Residue Cys136 is the Phosphocysteine intermediate of the active site. A compositionally biased stretch (polar residues) spans 213–229 (TQIDNGRPSTSQQIPAT). The segment at 213 to 243 (TQIDNGRPSTSQQIPATNGNNNQNGNQLSGG) is disordered. Low complexity predominate over residues 230-239 (NGNNNQNGNQ). A GTase region spans residues 241–585 (SGGGDNSKLF…NPVTETYLIE (345 aa)). The N6-GMP-lysine intermediate role is filled by Lys311. Residues Arg316, Arg331, 357–359 (DTE), 477–479 (KWK), and 553–558 (RERTDK) each bind GTP. Residues 603–623 (HHQIHQQQLHEGEPEARRQKL) form a disordered region. Positions 610–623 (QLHEGEPEARRQKL) are enriched in basic and acidic residues.

This sequence in the N-terminal section; belongs to the non-receptor class of the protein-tyrosine phosphatase family. The protein in the C-terminal section; belongs to the eukaryotic GTase family.

The protein resides in the nucleus. It catalyses the reaction a 5'-end triphospho-ribonucleoside in mRNA + H2O = a 5'-end diphospho-ribonucleoside in mRNA + phosphate + H(+). The enzyme catalyses a 5'-end diphospho-ribonucleoside in mRNA + GTP + H(+) = a 5'-end (5'-triphosphoguanosine)-ribonucleoside in mRNA + diphosphate. Its activity is regulated as follows. RNA triphosphatase activity is inhibited by magnesium. Bifunctional mRNA-capping enzyme exhibiting RNA 5'-triphosphate monophosphatase activity in the N-terminal part and mRNA guanylyltransferase activity in the C-terminal part. Catalyzes the first two steps of cap formation: by removing the gamma-phosphate from the 5'-triphosphate end of nascent mRNA to yield a diphosphate end, and by transferring the GMP moiety of GTP to the 5'-diphosphate terminus via a covalent enzyme-GMP reaction intermediate. This is mRNA-capping enzyme (cel-1) from Caenorhabditis elegans.